The chain runs to 311 residues: Olfactory receptor 4K1 (311 aa).

The Extracellular portion of the chain corresponds to 1-25 (MAHTNESMVSEFVLLGLSNSWGLQL). Asparagine 5 is a glycosylation site (N-linked (GlcNAc...) asparagine). Residues 26-49 (FFFAIFSIVYVTSVLGNVLIIVII) form a helical membrane-spanning segment. The Cytoplasmic portion of the chain corresponds to 50–57 (SFDSHLNS). A helical transmembrane segment spans residues 58–79 (PMYFLLSNLSFIDICQSNFATP). Residues 80 to 100 (KMLVDFFIERKTISFEGCMAQ) are Extracellular-facing. Cysteine 97 and cysteine 189 form a disulfide bridge. The chain crosses the membrane as a helical span at residues 101 to 120 (IFVLHSFVGSEMMLLVAMAY). At 121–139 (DRFIAICKPLHYSTIMNRR) the chain is on the cytoplasmic side. The helical transmembrane segment at 140 to 158 (LCVIFVSISWAVGVLHSVS) threads the bilayer. Topologically, residues 159 to 195 (HLAFTVDLPFCGPNEVDSFFCDLPLVIELACMDTYEM) are extracellular. The helical transmembrane segment at 196-219 (EIMTLTNSGLISLSCFLALIISYT) threads the bilayer. Topologically, residues 220 to 235 (IILIGVRCRSSSGSSK) are cytoplasmic. A helical membrane pass occupies residues 236-258 (ALSTLTAHITVVILFFGPCIYFY). Residues 259–269 (IWPFSRLPVDK) are Extracellular-facing. Residues 270–289 (FLSVFYTVCTPLLNPIIYSL) traverse the membrane as a helical segment. Residues 290–311 (RNEDVKAAMWKLRNRHVNSWKN) are Cytoplasmic-facing.

Belongs to the G-protein coupled receptor 1 family.

The protein resides in the cell membrane. Odorant receptor. This is Olfactory receptor 4K1 (OR4K1) from Homo sapiens (Human).